The primary structure comprises 491 residues: UDP-N-acetylmuramate--L-alanine ligase (491 aa).

An ATP-binding site is contributed by 126–132; the sequence is GTHGKTT.

This sequence belongs to the MurCDEF family.

It is found in the cytoplasm. It catalyses the reaction UDP-N-acetyl-alpha-D-muramate + L-alanine + ATP = UDP-N-acetyl-alpha-D-muramoyl-L-alanine + ADP + phosphate + H(+). The protein operates within cell wall biogenesis; peptidoglycan biosynthesis. Functionally, cell wall formation. This chain is UDP-N-acetylmuramate--L-alanine ligase, found in Photorhabdus laumondii subsp. laumondii (strain DSM 15139 / CIP 105565 / TT01) (Photorhabdus luminescens subsp. laumondii).